The sequence spans 226 residues: ATP synthase F(0) complex subunit a (226 aa).

6 helical membrane-spanning segments follow: residues 6–26 (FASFITPMILGLPLVTLIVLF), 68–88 (WTLMLMSLILFIGSTNLLGLL), 97–117 (QLSMNLGMAISLWAGAVITGF), 138–158 (IPMLVIIETISLFIQPMALAV), 164–184 (ITAGHLLIHLIGGATLALMSI), and 200–222 (TILEFAVAMIQAYVFTLLVSLYL).

Belongs to the ATPase A chain family. As to quaternary structure, component of the ATP synthase complex composed at least of ATP5F1A/subunit alpha, ATP5F1B/subunit beta, ATP5MC1/subunit c (homooctomer), MT-ATP6/subunit a, MT-ATP8/subunit 8, ATP5ME/subunit e, ATP5MF/subunit f, ATP5MG/subunit g, ATP5MK/subunit k, ATP5MJ/subunit j, ATP5F1C/subunit gamma, ATP5F1D/subunit delta, ATP5F1E/subunit epsilon, ATP5PF/subunit F6, ATP5PB/subunit b, ATP5PD/subunit d, ATP5PO/subunit OSCP. ATP synthase complex consists of a soluble F(1) head domain (subunits alpha(3) and beta(3)) - the catalytic core - and a membrane F(0) domain - the membrane proton channel (subunits c, a, 8, e, f, g, k and j). These two domains are linked by a central stalk (subunits gamma, delta, and epsilon) rotating inside the F1 region and a stationary peripheral stalk (subunits F6, b, d, and OSCP). Interacts with DNAJC30; interaction is direct.

The protein resides in the mitochondrion inner membrane. The catalysed reaction is H(+)(in) = H(+)(out). Subunit a, of the mitochondrial membrane ATP synthase complex (F(1)F(0) ATP synthase or Complex V) that produces ATP from ADP in the presence of a proton gradient across the membrane which is generated by electron transport complexes of the respiratory chain. ATP synthase complex consist of a soluble F(1) head domain - the catalytic core - and a membrane F(1) domain - the membrane proton channel. These two domains are linked by a central stalk rotating inside the F(1) region and a stationary peripheral stalk. During catalysis, ATP synthesis in the catalytic domain of F(1) is coupled via a rotary mechanism of the central stalk subunits to proton translocation. With the subunit c (ATP5MC1), forms the proton-conducting channel in the F(0) domain, that contains two crucial half-channels (inlet and outlet) that facilitate proton movement from the mitochondrial intermembrane space (IMS) into the matrix. Protons are taken up via the inlet half-channel and released through the outlet half-channel, following a Grotthuss mechanism. This Bos mutus grunniens (Wild yak) protein is ATP synthase F(0) complex subunit a.